We begin with the raw amino-acid sequence, 383 residues long: GTPase-interacting component 2 (383 aa).

The segment at 63-106 is disordered; that stretch reads SNKKNIELPPLSPNSHPSCHHRRSNSNSAKSKESSSSSSSANKT. Positions 87-105 are enriched in low complexity; that stretch reads NSNSAKSKESSSSSSSANK. One can recognise a CRIB domain in the interval 134–147; the sequence is ISTPFDFQHISHAD. Over residues 155-165 the composition is skewed to polar residues; it reads EQLQEPSSLST. The tract at residues 155–189 is disordered; it reads EQLQEPSSLSTEIKDDYTSSSSKRDSKSLNKAFVT. The segment covering 166–182 has biased composition (basic and acidic residues); sequence EIKDDYTSSSSKRDSKS. Residues S254, S258, S337, S345, and S367 each carry the phosphoserine modification. The segment at 319–361 is disordered; it reads ETPNSNKDSAKAFFPSRQSPLPKRRNSIATPSPQSKFSYSDSP. A compositionally biased stretch (polar residues) spans 345-361; sequence SIATPSPQSKFSYSDSP.

It belongs to the BORG/CEP family. Interacts with GTP-bound CDC42.

It is found in the bud neck. The protein localises to the bud tip. The protein resides in the cytoplasm. Its subcellular location is the cell cortex. It localises to the cytoskeleton. Functionally, required for cell size and shape control, bud site selection, bud emergence, actin cytoskeletal organization, mitotic spindle orientation/positioning, and mating projection formation in response to mating pheromone. This Saccharomyces cerevisiae (strain ATCC 204508 / S288c) (Baker's yeast) protein is GTPase-interacting component 2 (GIC2).